Consider the following 317-residue polypeptide: Methionyl-tRNA formyltransferase (317 aa).

(6S)-5,6,7,8-tetrahydrofolate is bound at residue 112 to 115 (SLLP).

This sequence belongs to the Fmt family.

It carries out the reaction L-methionyl-tRNA(fMet) + (6R)-10-formyltetrahydrofolate = N-formyl-L-methionyl-tRNA(fMet) + (6S)-5,6,7,8-tetrahydrofolate + H(+). In terms of biological role, attaches a formyl group to the free amino group of methionyl-tRNA(fMet). The formyl group appears to play a dual role in the initiator identity of N-formylmethionyl-tRNA by promoting its recognition by IF2 and preventing the misappropriation of this tRNA by the elongation apparatus. In Mycobacterium avium (strain 104), this protein is Methionyl-tRNA formyltransferase.